The chain runs to 2376 residues: Protein Ycf2 (2376 aa).

Disordered stretches follow at residues 173–194, 226–256, and 952–1011; these read SSQL…GTED, TEIE…EMNN, and KRKK…KRKE. Residues 235 to 245 are compositionally biased toward low complexity; that stretch reads KGLSGSSSKSR. Basic and acidic residues-rich tracts occupy residues 246–255 and 960–1009; these read LFTEGEKEMN and KRKE…PEKR. Residue 1441-1448 coordinates ATP; that stretch reads GSIGSGRS. Disordered regions lie at residues 1515-1534, 1860-2046, and 2112-2230; these read YEDR…DYEP, LVGS…LRPK, and PAEE…DGFS. Residues 1866–2025 are compositionally biased toward acidic residues; sequence TEEEVEGTEE…GEGTEDEEGE (160 aa). Residues 2026 to 2038 are compositionally biased toward basic and acidic residues; that stretch reads GTEKDSSQFDNDR. Acidic residues-rich tracts occupy residues 2112 to 2129 and 2136 to 2213; these read PAEE…EALE and GEEE…ENDS.

It belongs to the Ycf2 family.

It localises to the plastid. Its subcellular location is the chloroplast stroma. In terms of biological role, probable ATPase of unknown function. Its presence in a non-photosynthetic plant (Epifagus virginiana) and experiments in tobacco indicate that it has an essential function which is probably not related to photosynthesis. This Oenothera glazioviana (Large-flowered evening primrose) protein is Protein Ycf2.